Consider the following 144-residue polypeptide: Bacilliredoxin SSP1311 (144 aa).

The protein belongs to the bacilliredoxin family.

This chain is Bacilliredoxin SSP1311, found in Staphylococcus saprophyticus subsp. saprophyticus (strain ATCC 15305 / DSM 20229 / NCIMB 8711 / NCTC 7292 / S-41).